The following is a 101-amino-acid chain: uncharacterized protein (101 aa).

This is an uncharacterized protein from Mycoplasma pneumoniae (strain ATCC 29342 / M129 / Subtype 1) (Mycoplasmoides pneumoniae).